A 388-amino-acid polypeptide reads, in one-letter code: Succinate--CoA ligase [ADP-forming] subunit beta (388 aa).

An ATP-grasp domain is found at 9–244 (KQLFAEYGLP…PSQDDPREAH (236 aa)). Residues Lys-46, 53 to 55 (GRG), Glu-99, Thr-102, and Glu-107 each bind ATP. Asn-199 and Asp-213 together coordinate Mg(2+). Residues Asn-264 and 321 to 323 (GIV) each bind substrate.

This sequence belongs to the succinate/malate CoA ligase beta subunit family. As to quaternary structure, heterotetramer of two alpha and two beta subunits. Requires Mg(2+) as cofactor.

It catalyses the reaction succinate + ATP + CoA = succinyl-CoA + ADP + phosphate. The catalysed reaction is GTP + succinate + CoA = succinyl-CoA + GDP + phosphate. It participates in carbohydrate metabolism; tricarboxylic acid cycle; succinate from succinyl-CoA (ligase route): step 1/1. Its function is as follows. Succinyl-CoA synthetase functions in the citric acid cycle (TCA), coupling the hydrolysis of succinyl-CoA to the synthesis of either ATP or GTP and thus represents the only step of substrate-level phosphorylation in the TCA. The beta subunit provides nucleotide specificity of the enzyme and binds the substrate succinate, while the binding sites for coenzyme A and phosphate are found in the alpha subunit. In Stutzerimonas stutzeri (strain A1501) (Pseudomonas stutzeri), this protein is Succinate--CoA ligase [ADP-forming] subunit beta.